A 374-amino-acid chain; its full sequence is Protein RecA (374 aa).

Residue 66–73 coordinates ATP; sequence GPESSGKT. The interval 327-374 is disordered; the sequence is LGVGVHPEESATEPGADAASAAPADAAPAVPAPTTAKATKSKAAAAKS. A compositionally biased stretch (low complexity) spans 338–374; it reads TEPGADAASAAPADAAPAVPAPTTAKATKSKAAAAKS.

This sequence belongs to the RecA family.

It is found in the cytoplasm. Functionally, can catalyze the hydrolysis of ATP in the presence of single-stranded DNA, the ATP-dependent uptake of single-stranded DNA by duplex DNA, and the ATP-dependent hybridization of homologous single-stranded DNAs. It interacts with LexA causing its activation and leading to its autocatalytic cleavage. This Streptomyces lividans protein is Protein RecA.